A 100-amino-acid chain; its full sequence is Integration host factor subunit alpha (100 aa).

The segment at 53-72 (FDLRDKRQRPGRNPKTGEEI) is disordered.

This sequence belongs to the bacterial histone-like protein family. As to quaternary structure, heterodimer of an alpha and a beta chain.

Functionally, this protein is one of the two subunits of integration host factor, a specific DNA-binding protein that functions in genetic recombination as well as in transcriptional and translational control. The polypeptide is Integration host factor subunit alpha (Pseudomonas putida (strain ATCC 700007 / DSM 6899 / JCM 31910 / BCRC 17059 / LMG 24140 / F1)).